The sequence spans 142 residues: ATP synthase epsilon chain (142 aa).

Belongs to the ATPase epsilon chain family. F-type ATPases have 2 components, CF(1) - the catalytic core - and CF(0) - the membrane proton channel. CF(1) has five subunits: alpha(3), beta(3), gamma(1), delta(1), epsilon(1). CF(0) has three main subunits: a, b and c.

Its subcellular location is the cell inner membrane. Functionally, produces ATP from ADP in the presence of a proton gradient across the membrane. In Pasteurella multocida (strain Pm70), this protein is ATP synthase epsilon chain.